Reading from the N-terminus, the 386-residue chain is Diaminopimelate decarboxylase (386 aa).

Lys-46 carries the post-translational modification N6-(pyridoxal phosphate)lysine. Residues Gly-214 and 246–249 contribute to the pyridoxal 5'-phosphate site; that span reads EIGR. Positions 249, 285, and 289 each coordinate substrate. The Proton donor role is filled by Cys-314. Substrate is bound by residues Glu-315 and Tyr-343. Residue Tyr-343 participates in pyridoxal 5'-phosphate binding.

Belongs to the Orn/Lys/Arg decarboxylase class-II family. LysA subfamily. Homodimer. Requires pyridoxal 5'-phosphate as cofactor.

The enzyme catalyses meso-2,6-diaminopimelate + H(+) = L-lysine + CO2. Its pathway is amino-acid biosynthesis; L-lysine biosynthesis via DAP pathway; L-lysine from DL-2,6-diaminopimelate: step 1/1. Specifically catalyzes the decarboxylation of meso-diaminopimelate (meso-DAP) to L-lysine. The chain is Diaminopimelate decarboxylase from Thermotoga maritima (strain ATCC 43589 / DSM 3109 / JCM 10099 / NBRC 100826 / MSB8).